A 463-amino-acid polypeptide reads, in one-letter code: Probable transport protein HsrA (463 aa).

Helical transmembrane passes span 10-30 (GLAWVAAMALFMQSLDATILN), 49-69 (MAIIAYSLAVALFIPLTAWAA), 82-102 (VFTFILGSVACAAASNLESLI), 107-127 (IQGIGGAFMMPVARLAIIQAV), 139-159 (MATAGLIGPILGPILGGWLVI), 165-185 (WIFLINIPIGALGILASGSVM), 197-217 (WTGFLLFALGLVGITLGLDLL), 225-245 (SVTYSILVVGILLLVTYCGYA), 267-287 (IIANIFIRLSASGVPFLLPLM), 298-318 (MSGWLLAPIALISVMLKILIG), 328-348 (TTLISSALLMAGSVISMAWLD), 354-374 (TWIICNLMWYGACMSIIFTSI), 393-413 (VLSIVQQVGIGFGIAVSSIIL), and 429-449 (AFSYTFLTSSLFVIALVWSLM).

Belongs to the major facilitator superfamily. EmrB family.

It localises to the cell inner membrane. The polypeptide is Probable transport protein HsrA (hsrA) (Haemophilus influenzae (strain ATCC 51907 / DSM 11121 / KW20 / Rd)).